The chain runs to 453 residues: Ribulose bisphosphate carboxylase large chain (453 aa).

A propeptide spanning residues 1 to 2 is cleaved from the precursor; the sequence is MS. Residue Pro-3 is modified to N-acetylproline. Lys-14 is subject to N6,N6,N6-trimethyllysine. The substrate site is built by Asn-123 and Thr-173. Lys-175 (proton acceptor) is an active-site residue. Position 177 (Lys-177) interacts with substrate. The Mg(2+) site is built by Lys-201, Asp-203, and Glu-204. Lys-201 is modified (N6-carboxylysine). The active-site Proton acceptor is the His-294. Substrate is bound by residues Arg-295, His-327, and Ser-379.

Belongs to the RuBisCO large chain family. Type I subfamily. As to quaternary structure, heterohexadecamer of 8 large chains and 8 small chains; disulfide-linked. The disulfide link is formed within the large subunit homodimers. Mg(2+) serves as cofactor. Post-translationally, the disulfide bond which can form in the large chain dimeric partners within the hexadecamer appears to be associated with oxidative stress and protein turnover.

It localises to the plastid. It is found in the chloroplast. It carries out the reaction 2 (2R)-3-phosphoglycerate + 2 H(+) = D-ribulose 1,5-bisphosphate + CO2 + H2O. The enzyme catalyses D-ribulose 1,5-bisphosphate + O2 = 2-phosphoglycolate + (2R)-3-phosphoglycerate + 2 H(+). RuBisCO catalyzes two reactions: the carboxylation of D-ribulose 1,5-bisphosphate, the primary event in carbon dioxide fixation, as well as the oxidative fragmentation of the pentose substrate in the photorespiration process. Both reactions occur simultaneously and in competition at the same active site. This chain is Ribulose bisphosphate carboxylase large chain, found in Galium corsicum.